The following is a 217-amino-acid chain: Nuclear transcription factor Y subunit C-3 (217 aa).

Residues 1-28 show a composition bias toward polar residues; the sequence is MDQQGQSSAMNYGSNPYQTNAMTTTPTG. Disordered stretches follow at residues 1–29 and 198–217; these read MDQQGQSSAMNYGSNPYQTNAMTTTPTGS and PYMGQPMWQQPGPEQQDPDN.

The protein belongs to the NFYC/HAP5 subunit family. As to quaternary structure, heterotrimeric transcription factor composed of three components, NF-YA, NF-YB and NF-YC. NF-YB and NF-YC must interact and dimerize for NF-YA association and DNA binding. Ubiquitous.

The protein resides in the nucleus. Functionally, stimulates the transcription of various genes by recognizing and binding to a CCAAT motif in promoters. The polypeptide is Nuclear transcription factor Y subunit C-3 (NFYC3) (Arabidopsis thaliana (Mouse-ear cress)).